A 102-amino-acid chain; its full sequence is RNA-binding protein Hfq (102 aa).

The Sm domain occupies 9–68 (DPFLNALRRERVPVSIYLVNGIKLQGQIESFDQFVILLKNTVSQMVYKHAISTVVPSRPV). Residues 63 to 102 (VPSRPVSHHSNNAGGGASNNYHHGSNVQGSTAQQDSEETE) are disordered. Residues 70 to 88 (HHSNNAGGGASNNYHHGSN) are compositionally biased toward low complexity.

Belongs to the Hfq family. In terms of assembly, homohexamer.

RNA chaperone that binds small regulatory RNA (sRNAs) and mRNAs to facilitate mRNA translational regulation in response to envelope stress, environmental stress and changes in metabolite concentrations. Also binds with high specificity to tRNAs. The protein is RNA-binding protein Hfq of Salmonella choleraesuis (strain SC-B67).